The primary structure comprises 453 residues: UDP-glycosyltransferase 79B3 (453 aa).

UDP-alpha-D-glucose contacts are provided by residues Ser266, 325–327, 342–350, and 364–367; these read VQQ, HCGFGSMWE, and LGDQ.

The protein belongs to the UDP-glycosyltransferase family.

The sequence is that of UDP-glycosyltransferase 79B3 (UGT79B3) from Arabidopsis thaliana (Mouse-ear cress).